A 262-amino-acid polypeptide reads, in one-letter code: Late embryogenesis abundant protein 31 (262 aa).

Residues 6-10 carry the Nuclear localization signal (NLS) motif; the sequence is QPKRP. SMP domains lie at 14–68, 136–192, and 201–260; these read VTYG…ANKR, ITIG…NHNA, and IKLI…NERA.

The protein belongs to the LEA type SMP family. Embryo specific, only in dry mature seeds.

Its subcellular location is the nucleus. The protein localises to the nucleolus. It is found in the cytoplasm. In terms of biological role, LEA proteins are late embryonic proteins abundant in higher plant seed embryos. The function of those proteins is not known. Promotes germination rate. Enhances cation toxicity (e.g. lithium ion) and osmotic stress (e.g. NaCl and sorbitol) tolerance during germination and in seedlings. This is Late embryogenesis abundant protein 31 from Arabidopsis thaliana (Mouse-ear cress).